Consider the following 126-residue polypeptide: Small ribosomal subunit protein uS11 (126 aa).

This sequence belongs to the universal ribosomal protein uS11 family. In terms of assembly, part of the 30S ribosomal subunit. Interacts with proteins S7 and S18. Binds to IF-3.

In terms of biological role, located on the platform of the 30S subunit, it bridges several disparate RNA helices of the 16S rRNA. Forms part of the Shine-Dalgarno cleft in the 70S ribosome. The protein is Small ribosomal subunit protein uS11 of Ehrlichia chaffeensis (strain ATCC CRL-10679 / Arkansas).